A 191-amino-acid chain; its full sequence is Ribonuclease M5 (191 aa).

The Toprim domain occupies His-8–Pro-91. Positions 14, 60, and 62 each coordinate Mg(2+).

Belongs to the ribonuclease M5 family. Mg(2+) is required as a cofactor.

The protein localises to the cytoplasm. The enzyme catalyses Endonucleolytic cleavage of RNA, removing 21 and 42 nucleotides, respectively, from the 5'- and 3'-termini of a 5S-rRNA precursor.. Functionally, required for correct processing of both the 5' and 3' ends of 5S rRNA precursor. Cleaves both sides of a double-stranded region yielding mature 5S rRNA in one step. The chain is Ribonuclease M5 from Listeria monocytogenes serovar 1/2a (strain ATCC BAA-679 / EGD-e).